A 708-amino-acid chain; its full sequence is Elongation factor G (708 aa).

The tr-type G domain maps to 8-290 (KRYRNIGISA…AVIQYLPAPM (283 aa)). Residues 17-24 (AHIDAGKT), 88-92 (DTPGH), and 142-145 (NKMD) contribute to the GTP site.

Belongs to the TRAFAC class translation factor GTPase superfamily. Classic translation factor GTPase family. EF-G/EF-2 subfamily.

The protein localises to the cytoplasm. Functionally, catalyzes the GTP-dependent ribosomal translocation step during translation elongation. During this step, the ribosome changes from the pre-translocational (PRE) to the post-translocational (POST) state as the newly formed A-site-bound peptidyl-tRNA and P-site-bound deacylated tRNA move to the P and E sites, respectively. Catalyzes the coordinated movement of the two tRNA molecules, the mRNA and conformational changes in the ribosome. This is Elongation factor G from Psychrobacter cryohalolentis (strain ATCC BAA-1226 / DSM 17306 / VKM B-2378 / K5).